Here is a 296-residue protein sequence, read N- to C-terminus: 4-hydroxy-tetrahydrodipicolinate synthase (296 aa).

Residue Thr-49 coordinates pyruvate. Tyr-137 functions as the Proton donor/acceptor in the catalytic mechanism. Lys-165 acts as the Schiff-base intermediate with substrate in catalysis. Ile-208 is a binding site for pyruvate.

This sequence belongs to the DapA family. Homotetramer; dimer of dimers.

The protein localises to the cytoplasm. It catalyses the reaction L-aspartate 4-semialdehyde + pyruvate = (2S,4S)-4-hydroxy-2,3,4,5-tetrahydrodipicolinate + H2O + H(+). Its pathway is amino-acid biosynthesis; L-lysine biosynthesis via DAP pathway; (S)-tetrahydrodipicolinate from L-aspartate: step 3/4. Functionally, catalyzes the condensation of (S)-aspartate-beta-semialdehyde [(S)-ASA] and pyruvate to 4-hydroxy-tetrahydrodipicolinate (HTPA). The chain is 4-hydroxy-tetrahydrodipicolinate synthase from Ehrlichia canis (strain Jake).